A 159-amino-acid polypeptide reads, in one-letter code: MEVSMRKPYFIEEEDDGFVSLSEMEAGVSSPSCYNYPQSYYYNHHHHQYSVSSPRSGKFHDFRFDNSYYGYGQPHFLDSCFLCKKRLGDNRDIFMYRGDTPFCSEECREEQIERDEAKEKKQSLSTSVKAMRRNEKRSSSSSPTRSRNYAFRTGTVAAA.

An FLZ-type zinc finger spans residues 75–119; that stretch reads HFLDSCFLCKKRLGDNRDIFMYRGDTPFCSEECREEQIERDEAKE. The span at 113 to 122 shows a compositional bias: basic and acidic residues; the sequence is ERDEAKEKKQ. The segment at 113–159 is disordered; it reads ERDEAKEKKQSLSTSVKAMRRNEKRSSSSSPTRSRNYAFRTGTVAAA.

The protein belongs to the FLZ family. In terms of assembly, interacts with KIN10 and KIN11 via its FLZ-type zinc finger domain. Interacts with KINB1, KINB2, KINB3 and SNF4 via its N-terminal part. Forms heterodimer with FLZ7, FLZ10, FLZ11, FLZ12, FLZ15, FLZ17 and FLZ18 in vitro.

May act as an adapter to facilitate the interaction of SnRK1 complex with effector proteins, conferring tissue- and stimulus-type specific differences in the SnRK1 regulation pathway. This Arabidopsis thaliana (Mouse-ear cress) protein is FCS-Like Zinc finger 2.